Here is a 487-residue protein sequence, read N- to C-terminus: Mu-like prophage FluMu tail sheath protein (487 aa).

This sequence belongs to the myoviridae tail sheath protein family.

Functionally, major component of the tail. This chain is Mu-like prophage FluMu tail sheath protein, found in Haemophilus influenzae (strain ATCC 51907 / DSM 11121 / KW20 / Rd).